Here is a 111-residue protein sequence, read N- to C-terminus: Cornifelin homolog B (111 aa).

The protein belongs to the cornifelin family.

The chain is Cornifelin homolog B (cnfn-b) from Xenopus laevis (African clawed frog).